The following is a 130-amino-acid chain: Chaperone protein SycT (130 aa).

In terms of assembly, binds to YopT.

Its function is as follows. Functions as a specific chaperone for YopT. This chain is Chaperone protein SycT (sycT), found in Yersinia enterocolitica.